The sequence spans 559 residues: 2-succinyl-5-enolpyruvyl-6-hydroxy-3-cyclohexene-1-carboxylate synthase (559 aa).

It belongs to the TPP enzyme family. MenD subfamily. Homodimer. Mg(2+) serves as cofactor. Requires Mn(2+) as cofactor. Thiamine diphosphate is required as a cofactor.

It catalyses the reaction isochorismate + 2-oxoglutarate + H(+) = 5-enolpyruvoyl-6-hydroxy-2-succinyl-cyclohex-3-ene-1-carboxylate + CO2. It participates in quinol/quinone metabolism; 1,4-dihydroxy-2-naphthoate biosynthesis; 1,4-dihydroxy-2-naphthoate from chorismate: step 2/7. Its pathway is quinol/quinone metabolism; menaquinone biosynthesis. Functionally, catalyzes the thiamine diphosphate-dependent decarboxylation of 2-oxoglutarate and the subsequent addition of the resulting succinic semialdehyde-thiamine pyrophosphate anion to isochorismate to yield 2-succinyl-5-enolpyruvyl-6-hydroxy-3-cyclohexene-1-carboxylate (SEPHCHC). The chain is 2-succinyl-5-enolpyruvyl-6-hydroxy-3-cyclohexene-1-carboxylate synthase from Edwardsiella ictaluri (strain 93-146).